We begin with the raw amino-acid sequence, 1856 residues long: DNA-directed RNA polymerase II subunit RPB1 (1856 aa).

Zn(2+) contacts are provided by cysteine 66, cysteine 69, cysteine 76, histidine 79, cysteine 106, cysteine 109, cysteine 149, and cysteine 177. The segment at 256 to 268 is lid loop; the sequence is PAVVTFGSAKNQD. A rudder loop region spans residues 314 to 331; that stretch reads NCIPGLPTATQKGGRPLK. Mg(2+) contacts are provided by aspartate 489, aspartate 491, and aspartate 493. The interval 827-839 is bridging helix; sequence PSEFFFHAMGGRE. A Glycyl lysine isopeptide (Lys-Gly) (interchain with G-Cter in ubiquitin) cross-link involves residue lysine 1260. The disordered stretch occupies residues 1523-1856; that stretch reads PTTGGMSPGA…PSSPTYDPNS (334 aa). Low complexity predominate over residues 1587-1856; the sequence is SMTSPHYSPT…PSSPTYDPNS (270 aa). A run of 27 repeats spans residues 1593–1599, 1600–1606, 1616–1622, 1623–1629, 1630–1636, 1637–1643, 1644–1650, 1651–1657, 1658–1664, 1665–1671, 1672–1678, 1679–1685, 1686–1692, 1693–1699, 1700–1706, 1707–1713, 1720–1726, 1727–1733, 1734–1740, 1741–1747, 1748–1754, 1755–1761, 1769–1775, 1782–1788, 1789–1795, 1796–1802, and 1803–1809. A C-terminal domain (CTD); 28 X 7 AA approximate tandem repeats of Y-[ST]-P-[ST]-S-P-[AGKNQRST] region spans residues 1593 to 1816; sequence YSPTSPSYSP…SPTYTPSPSE (224 aa). Residues 1810-1816 form a 28; approximate repeat; that stretch reads YTPSPSE.

The protein belongs to the RNA polymerase beta' chain family. As to quaternary structure, component of the RNA polymerase II (Pol II) complex consisting of 12 subunits. Interacts with sig-7. Post-translationally, the tandem 7 residues repeats in the C-terminal domain (CTD) can be highly phosphorylated. The phosphorylation activates Pol II. Phosphorylation occurs mainly at residues 'Ser-2' and 'Ser-5' of the heptapeptide repeat and starts at the 3- to 4-cell embryonic stage. This phosphorylation also occurs in the early stages of oocyte development and is not detected in oocytes arrested at the meiotic diakinesis stage. In the somatic lineage, phosphorylation at 'Ser-2' is mediated by cdk-12 downstream of cdk-9 whereas in the germline lineage cdk-12 phosphorylates 'Ser-2' independently of cdk-9. Phosphorylation is likely mediated by cdk-7. May be dephosphorylated by fcp-1 in diakinetic oocytes and in 1-cell and 2-cell embryos. Dephosphorylated at 'Ser-5' of the heptapeptide repeats by ssup-72. The phosphorylation state is believed to result from the balanced action of site-specific CTD kinases and phosphatase, and a 'CTD code' that specifies the position of Pol II within the transcription cycle has been proposed. In terms of processing, following transcription stress, the elongating form of RNA polymerase II (RNA pol IIo) is polyubiquitinated via 'Lys-63'-linkages on Lys-1260 at DNA damage sites without leading to degradation: ubiquitination promotes RNA pol IIo backtracking to allow access by the transcription-coupled nucleotide excision repair (TC-NER) machinery. Subsequent DEF1-dependent polyubiquitination by the elongin complex via 'Lys-48'-linkages may lead to proteasome-mediated degradation; presumably at stalled RNA pol II where TC-NER has failed, to halt global transcription and enable 'last resort' DNA repair pathways.

The protein resides in the nucleus. Its subcellular location is the chromosome. The catalysed reaction is RNA(n) + a ribonucleoside 5'-triphosphate = RNA(n+1) + diphosphate. Its function is as follows. DNA-dependent RNA polymerase catalyzes the transcription of DNA into RNA using the four ribonucleoside triphosphates as substrates. Largest and catalytic component of RNA polymerase II which synthesizes mRNA precursors and many functional non-coding RNAs. Forms the polymerase active center together with the second largest subunit. Pol II is the central component of the basal RNA polymerase II transcription machinery. It is composed of mobile elements that move relative to each other. RPB1 is part of the core element with the central large cleft, the clamp element that moves to open and close the cleft and the jaws that are thought to grab the incoming DNA template. At the start of transcription, a single-stranded DNA template strand of the promoter is positioned within the central active site cleft of Pol II. A bridging helix emanates from RPB1 and crosses the cleft near the catalytic site and is thought to promote translocation of Pol II by acting as a ratchet that moves the RNA-DNA hybrid through the active site by switching from straight to bent conformations at each step of nucleotide addition. During transcription elongation, Pol II moves on the template as the transcript elongates. Elongation is influenced by the phosphorylation status of the C-terminal domain (CTD) of Pol II largest subunit (RPB1), which serves as a platform for assembly of factors that regulate transcription initiation, elongation, termination and mRNA processing. Involved in the transcription of several genes including those involved in embryogenesis. The chain is DNA-directed RNA polymerase II subunit RPB1 from Caenorhabditis elegans.